The sequence spans 499 residues: Glutathione reductase, cytosolic (499 aa).

S35, G36, E55, T72, C73, and K81 together coordinate FAD. A glutathione-binding site is contributed by S35. A disulfide bond links C73 and C78. Position 130 (Y130) interacts with glutathione. G146 is an FAD binding site. Positions 211, 214, 217, 234, 240, and 297 each coordinate NADP(+). The FAD site is built by D338 and T346. A376 provides a ligand contact to NADP(+). H472 is an FAD binding site. H472 serves as the catalytic Proton acceptor.

Belongs to the class-I pyridine nucleotide-disulfide oxidoreductase family. In terms of assembly, homodimer. FAD serves as cofactor.

The protein localises to the cytoplasm. It carries out the reaction 2 glutathione + NADP(+) = glutathione disulfide + NADPH + H(+). Catalyzes the reduction of glutathione disulfide (GSSG) to reduced glutathione (GSH). Constitutes the major mechanism to maintain a high GSH:GSSG ratio in the cytosol. This chain is Glutathione reductase, cytosolic, found in Arabidopsis thaliana (Mouse-ear cress).